The chain runs to 167 residues: Sperm acrosome membrane-associated protein 3 (167 aa).

Residues 1–63 lie on the Cytoplasmic side of the membrane; it reads MVSALREAPL…EARSRALRRR (63 aa). A helical; Signal-anchor for type II membrane protein membrane pass occupies residues 64-84; it reads WCPAGIILLALISLLSCLLPA. The Extracellular portion of the chain corresponds to 85–167; that stretch reads SEAKVYGRCE…VPNVCQMYCS (83 aa). In terms of domain architecture, C-type lysozyme spans 88–167; sequence KVYGRCELAR…VPNVCQMYCS (80 aa). Cysteines 151 and 166 form a disulfide.

The protein belongs to the glycosyl hydrolase 22 family. As to quaternary structure, interacts with ASTL. The processed form derives from the membrane form by proteolytic processing.

It is found in the cytoplasmic vesicle. The protein localises to the secretory vesicle. Its subcellular location is the acrosome membrane. Its function is as follows. Sperm surface membrane protein that may be involved in sperm-egg plasma membrane adhesion and fusion during fertilization. It could be a potential receptor for the egg oligosaccharide residue N-acetylglucosamine, which is present in the extracellular matrix over the egg plasma membrane. The processed form has no detectable bacteriolytic activity in vitro. This Pongo pygmaeus (Bornean orangutan) protein is Sperm acrosome membrane-associated protein 3 (SPACA3).